A 237-amino-acid polypeptide reads, in one-letter code: UPF0174 protein YaaW (237 aa).

It belongs to the UPF0174 family.

The polypeptide is UPF0174 protein YaaW (Escherichia coli O157:H7).